The following is a 192-amino-acid chain: 4'-phosphopantetheinyl transferase AcpT (192 aa).

The protein belongs to the P-Pant transferase superfamily. Gsp/Sfp/HetI/AcpT family.

The enzyme catalyses apo-[ACP] + CoA = holo-[ACP] + adenosine 3',5'-bisphosphate + H(+). May be involved in an alternative pathway for phosphopantetheinyl transfer and holo-ACP synthesis. The native apo-protein substrate is unknown. The sequence is that of 4'-phosphopantetheinyl transferase AcpT (acpT) from Salmonella typhi.